Here is a 678-residue protein sequence, read N- to C-terminus: UvrABC system protein C (678 aa).

A GIY-YIG domain is found at 16–95 (VEPGVYRFRD…IKEFDPRFNI (80 aa)). The 36-residue stretch at 208-243 (DRLIREMEQQMNAAAEELDFERAARLRDNIGAMRRA) folds into the UVR domain. A disordered region spans residues 477–508 (HLRDAEAAPEGRPEQGPRASARPEQGPRASAR). A compositionally biased stretch (basic and acidic residues) spans 479–491 (RDAEAAPEGRPEQ).

Belongs to the UvrC family. In terms of assembly, interacts with UvrB in an incision complex.

It is found in the cytoplasm. The UvrABC repair system catalyzes the recognition and processing of DNA lesions. UvrC both incises the 5' and 3' sides of the lesion. The N-terminal half is responsible for the 3' incision and the C-terminal half is responsible for the 5' incision. The protein is UvrABC system protein C of Mycolicibacterium vanbaalenii (strain DSM 7251 / JCM 13017 / BCRC 16820 / KCTC 9966 / NRRL B-24157 / PYR-1) (Mycobacterium vanbaalenii).